A 597-amino-acid chain; its full sequence is ATP-dependent RNA helicase DBP9 (597 aa).

Residues 1–13 are compositionally biased toward basic and acidic residues; it reads MAMKRKLNEHDVP. The tract at residues 1–43 is disordered; the sequence is MAMKRKLNEHDVPEPESPQSPKRRASDASQSEPASPPAPTPAK. The Q motif motif lies at 47–75; that stretch reads ASFAELQLEPRLLRGIRDQKWGSPTAVQS. The region spanning 78 to 249 is the Helicase ATP-binding domain; it reads IPLALQGRDI…SLLCNDPVVL (172 aa). 91–98 contacts ATP; it reads SGTGTGKT. The DEAD box signature appears at 197–200; that stretch reads DEGD. Residues 260 to 469 enclose the Helicase C-terminal domain; sequence RVKQYVIKCA…NYNFDMKRLE (210 aa). The disordered stretch occupies residues 352–374; that stretch reads SQKKADESRPKKKPKTDKEAKND.

Belongs to the DEAD box helicase family. DDX56/DBP9 subfamily.

The protein localises to the nucleus. The protein resides in the nucleolus. It catalyses the reaction ATP + H2O = ADP + phosphate + H(+). Functionally, ATP-binding RNA helicase involved in the biogenesis of 60S ribosomal subunits and is required for the normal formation of 25S and 5.8S rRNAs. The polypeptide is ATP-dependent RNA helicase DBP9 (DBP9) (Phaeosphaeria nodorum (strain SN15 / ATCC MYA-4574 / FGSC 10173) (Glume blotch fungus)).